Reading from the N-terminus, the 338-residue chain is Phenylalanine--tRNA ligase alpha subunit (338 aa).

Mg(2+) is bound at residue glutamate 252.

It belongs to the class-II aminoacyl-tRNA synthetase family. Phe-tRNA synthetase alpha subunit type 1 subfamily. In terms of assembly, tetramer of two alpha and two beta subunits. Requires Mg(2+) as cofactor.

It is found in the cytoplasm. It carries out the reaction tRNA(Phe) + L-phenylalanine + ATP = L-phenylalanyl-tRNA(Phe) + AMP + diphosphate + H(+). This is Phenylalanine--tRNA ligase alpha subunit from Pseudomonas syringae pv. tomato (strain ATCC BAA-871 / DC3000).